We begin with the raw amino-acid sequence, 433 residues long: Phosphomethylpyrimidine synthase (433 aa).

Substrate-binding positions include Asn-68, Met-97, Tyr-126, His-162, 184 to 186 (SRG), 225 to 228 (DALR), and Glu-264. Residue His-268 coordinates Zn(2+). Residue Tyr-291 coordinates substrate. His-332 serves as a coordination point for Zn(2+). [4Fe-4S] cluster is bound by residues Cys-408, Cys-411, and Cys-415.

This sequence belongs to the ThiC family. It depends on [4Fe-4S] cluster as a cofactor.

It catalyses the reaction 5-amino-1-(5-phospho-beta-D-ribosyl)imidazole + S-adenosyl-L-methionine = 4-amino-2-methyl-5-(phosphooxymethyl)pyrimidine + CO + 5'-deoxyadenosine + formate + L-methionine + 3 H(+). It participates in cofactor biosynthesis; thiamine diphosphate biosynthesis. In terms of biological role, catalyzes the synthesis of the hydroxymethylpyrimidine phosphate (HMP-P) moiety of thiamine from aminoimidazole ribotide (AIR) in a radical S-adenosyl-L-methionine (SAM)-dependent reaction. The chain is Phosphomethylpyrimidine synthase from Fusobacterium nucleatum subsp. nucleatum (strain ATCC 25586 / DSM 15643 / BCRC 10681 / CIP 101130 / JCM 8532 / KCTC 2640 / LMG 13131 / VPI 4355).